We begin with the raw amino-acid sequence, 400 residues long: MSGCQFNQPYCPRSEEKKSIAESIEKATLMEPSIDAQSAQKGVYYGSYLKLDELLNIQECESVKVGAPAHEEMLFIIIHQTYELWFKQMIHEIDSIRSIMSTPPTPERLNGVIVNRLGRITEIQKLLVDQISILETMTSVDFLEFRNLLVPASGFQSVQFRMIENKLGILPNTRVQYQQHHYHSFFNEKDRKALQATENEVSLLQLVIQWLERNPFLYYKGYDFWSSYKSAVDQILENDLQRIQANNDLSQDMKDQSTKEAKKNMESFSTLFDEVAYNERLEKGEVRLSYKALQSAILIYLYKDEPIFHTPFLILNLLTEIDELLTMWRFRHTMMVQRIIGAKIGTGGSSGYHYLRTTVGDRYKIFLDLFNISSYLIPKNTLPQLPKVVKEQMDFAWSIL.

Substrate contacts are provided by residues Phe75–His79 and Arg146. Residue His332 participates in heme binding. Residue Thr346 coordinates substrate.

Belongs to the tryptophan 2,3-dioxygenase family. In terms of assembly, homotetramer. Dimer of dimers. Heme is required as a cofactor.

The catalysed reaction is L-tryptophan + O2 = N-formyl-L-kynurenine. Its pathway is amino-acid degradation; L-tryptophan degradation via kynurenine pathway; L-kynurenine from L-tryptophan: step 1/2. Its function is as follows. Heme-dependent dioxygenase that catalyzes the oxidative cleavage of the L-tryptophan (L-Trp) pyrrole ring and converts L-tryptophan to N-formyl-L-kynurenine. Catalyzes the oxidative cleavage of the indole moiety. The chain is Tryptophan 2,3-dioxygenase from Dictyostelium discoideum (Social amoeba).